Consider the following 389-residue polypeptide: S-adenosylmethionine synthase (389 aa).

His-15 provides a ligand contact to ATP. Asp-17 is a Mg(2+) binding site. Glu-43 serves as a coordination point for K(+). L-methionine-binding residues include Glu-56 and Gln-99. Residues 99-109 (QSPDIAQGVNE) form a flexible loop region. Residues 166–168 (DAK), 234–235 (RF), Asp-243, 249–250 (RK), Ala-266, and Lys-270 contribute to the ATP site. Asp-243 serves as a coordination point for L-methionine. L-methionine is bound at residue Lys-274.

The protein belongs to the AdoMet synthase family. Homotetramer; dimer of dimers. The cofactor is Mg(2+). Requires K(+) as cofactor.

Its subcellular location is the cytoplasm. The enzyme catalyses L-methionine + ATP + H2O = S-adenosyl-L-methionine + phosphate + diphosphate. The protein operates within amino-acid biosynthesis; S-adenosyl-L-methionine biosynthesis; S-adenosyl-L-methionine from L-methionine: step 1/1. Functionally, catalyzes the formation of S-adenosylmethionine (AdoMet) from methionine and ATP. The overall synthetic reaction is composed of two sequential steps, AdoMet formation and the subsequent tripolyphosphate hydrolysis which occurs prior to release of AdoMet from the enzyme. In Neisseria gonorrhoeae (strain ATCC 700825 / FA 1090), this protein is S-adenosylmethionine synthase.